Consider the following 398-residue polypeptide: Phosphoglycerate kinase (398 aa).

Substrate contacts are provided by residues 23–25 (DLN), R38, 61–64 (HFGR), R119, and R152. ATP contacts are provided by residues K202, E324, and 354-357 (GGDT).

This sequence belongs to the phosphoglycerate kinase family. As to quaternary structure, monomer.

It localises to the cytoplasm. It catalyses the reaction (2R)-3-phosphoglycerate + ATP = (2R)-3-phospho-glyceroyl phosphate + ADP. The protein operates within carbohydrate degradation; glycolysis; pyruvate from D-glyceraldehyde 3-phosphate: step 2/5. The polypeptide is Phosphoglycerate kinase (Rhodopseudomonas palustris (strain ATCC BAA-98 / CGA009)).